The chain runs to 265 residues: Aquaporin-5 (265 aa).

At 1-12 (MKKEVCSLAFFK) the chain is on the cytoplasmic side. Residues 13-33 (AVFAEFLATLIFVFFGLGSAL) traverse the membrane as a helical segment. At 34–39 (KWPSAL) the chain is on the extracellular side. The chain crosses the membrane as a helical span at residues 40–60 (PTILQISIAFGLAIGTLAQAL). The Cytoplasmic portion of the chain corresponds to 61–65 (GPVSG). Residues 66-74 (GHINPAITL) constitute an intramembrane region (discontinuously helical). Residues 69 to 71 (NPA) carry the NPA 1 motif. Residues 75 to 87 (ALLIGNQISLLRA) are Cytoplasmic-facing. A helical transmembrane segment spans residues 88-108 (VFYVAAQLVGAIAGAGILYWL). The Extracellular segment spans residues 109–126 (APLNARGNLAVNALNNNT). A glycan (N-linked (GlcNAc...) asparagine) is linked at N124. A helical membrane pass occupies residues 127–147 (TPGKAMVVELILTFQLALCIF). Residues 148–158 (SSTDSRRTSPV) are Cytoplasmic-facing. The helical transmembrane segment at 159 to 179 (GSPALSIGLSVTLGHLVGIYF) threads the bilayer. Residue T180 is a topological domain, extracellular. The discontinuously helical intramembrane region spans 181 to 191 (GCSMNPARSFG). An NPA 2 motif is present at residues 185–187 (NPA). The Extracellular portion of the chain corresponds to 192–203 (PAVVMNRFSPSH). A helical transmembrane segment spans residues 204–224 (WVFWVGPIVGAMLAAILYFYL). At 225–265 (LFPSSLSLHDRVAVVKGTYEPEEDWEDHREERKKTIELTAH) the chain is on the cytoplasmic side.

The protein belongs to the MIP/aquaporin (TC 1.A.8) family. As to quaternary structure, homotetramer; each monomer provides an independent water pore. Interacts with TRPV4; the interaction is probably indirect and regulates TRPV4 activation by hypotonicity. In terms of tissue distribution, salivary glands, lacrimal glands, corneal epithelium in eye, trachea and lung.

The protein resides in the apical cell membrane. It localises to the cell membrane. The protein localises to the cytoplasmic vesicle membrane. The catalysed reaction is H2O(in) = H2O(out). Aquaporins form homotetrameric transmembrane channels, with each monomer independently mediating water transport across the plasma membrane along its osmotic gradient. Plays an important role in fluid secretion in salivary glands. Required for TRPV4 activation by hypotonicity. Together with TRPV4, controls regulatory volume decrease in salivary epithelial cells. Seems to play a redundant role in water transport in the eye, lung and in sweat glands. This is Aquaporin-5 from Rattus norvegicus (Rat).